Reading from the N-terminus, the 419-residue chain is Ribosome biogenesis protein WDR12 homolog (419 aa).

The segment at 10–91 (VQVHLKTKQE…EDSIEIEYVE (82 aa)) is ubiquitin-like (UBL) domain. 7 WD repeats span residues 103-140 (LHDDWVSAVKASGKWILTGCYDNTLNIWTYKGKHKLTI), 142-184 (GHTA…NAVE), 191-230 (GHERGVDSVCVSPDAQRFATGSWDTMLKIWSAELEDAGES), 249-287 (GHRESISAVQWMDNNTLLTGSWDHTLKVWDLNLEGIKTE), 289-328 (STNKSIFDASHSKLNNLIVTASADKNLRLYDARTNQGSVV), 334-374 (GHNA…APLY), and 378-416 (GHGEKVLDIDWSNPKYIVSGGADNTVRVFKSSKATVENM).

It belongs to the WD repeat WDR12/YTM1 family.

Its subcellular location is the nucleus. It localises to the nucleolus. The protein resides in the nucleoplasm. In terms of biological role, required for maturation of ribosomal RNAs and formation of the large ribosomal subunit. This Drosophila mojavensis (Fruit fly) protein is Ribosome biogenesis protein WDR12 homolog.